Consider the following 251-residue polypeptide: Probable transcriptional regulatory protein DET0444 (251 aa).

It belongs to the TACO1 family.

It is found in the cytoplasm. This chain is Probable transcriptional regulatory protein DET0444, found in Dehalococcoides mccartyi (strain ATCC BAA-2266 / KCTC 15142 / 195) (Dehalococcoides ethenogenes (strain 195)).